We begin with the raw amino-acid sequence, 974 residues long: Membrane-associated phosphatidylinositol transfer protein 3 (974 aa).

S30, S31, S109, S295, S298, S321, S343, and S495 each carry phosphoserine. Residues 284–304 (GDSPASSSRKGSISSTQDTPV) form a disordered region. The span at 292-302 (RKGSISSTQDT) shows a compositional bias: polar residues. 2 disordered regions span residues 323-346 (IDISSGLEDEEPKRPLPRKQSDSS) and 491-536 (SSRD…SMAP). The DDHD domain occupies 390 to 594 (FDFDVSDFFL…VAFILRQVMR (205 aa)). The span at 520 to 533 (EGSSHSESSESSDS) shows a compositional bias: low complexity. 4 positions are modified to phosphoserine: S612, S907, S928, and S946. The interval 927-974 (MSVQQPDPPAANPKPERAQSQPESDKDHERPLPALSWARGPPKFESVP) is disordered.

The protein belongs to the PtdIns transfer protein family. PI transfer class IIA subfamily. Interacts with PTK2B via its C-terminus. Detected in brain and spleen, and at low levels in ovary.

It is found in the endomembrane system. Its function is as follows. Catalyzes the transfer of phosphatidylinositol and phosphatidylcholine between membranes (in vitro). Binds calcium ions. This Homo sapiens (Human) protein is Membrane-associated phosphatidylinositol transfer protein 3 (PITPNM3).